We begin with the raw amino-acid sequence, 462 residues long: GTPase Der (462 aa).

EngA-type G domains lie at 9–171 and 201–372; these read KTIA…GLTK and IQVG…ECFS. GTP-binding positions include 15–22, 62–66, 123–126, 207–214, 254–258, and 318–321; these read GQPNVGKS, DTGGM, NKID, GRVNVGKS, DTAGI, and NKWD. Residues 373-457 form the KH-like domain; sequence KRIPTSLLNS…PLIINAKDKK (85 aa).

It belongs to the TRAFAC class TrmE-Era-EngA-EngB-Septin-like GTPase superfamily. EngA (Der) GTPase family. As to quaternary structure, associates with the 50S ribosomal subunit.

Its function is as follows. GTPase that plays an essential role in the late steps of ribosome biogenesis. The protein is GTPase Der of Helicobacter acinonychis (strain Sheeba).